The primary structure comprises 218 residues: 3,4-dihydroxy-2-butanone 4-phosphate synthase (218 aa).

D-ribulose 5-phosphate is bound by residues Arg-38–Glu-39, Asp-43, Arg-151–Thr-155, and Glu-175. Residue Glu-39 participates in Mg(2+) binding. His-154 provides a ligand contact to Mg(2+).

Belongs to the DHBP synthase family. As to quaternary structure, homodimer. It depends on Mg(2+) as a cofactor. The cofactor is Mn(2+).

It carries out the reaction D-ribulose 5-phosphate = (2S)-2-hydroxy-3-oxobutyl phosphate + formate + H(+). The protein operates within cofactor biosynthesis; riboflavin biosynthesis; 2-hydroxy-3-oxobutyl phosphate from D-ribulose 5-phosphate: step 1/1. In terms of biological role, catalyzes the conversion of D-ribulose 5-phosphate to formate and 3,4-dihydroxy-2-butanone 4-phosphate. This Vibrio cholerae serotype O1 (strain ATCC 39541 / Classical Ogawa 395 / O395) protein is 3,4-dihydroxy-2-butanone 4-phosphate synthase.